A 230-amino-acid polypeptide reads, in one-letter code: Probable septum site-determining protein MinC (230 aa).

Belongs to the MinC family. As to quaternary structure, interacts with MinD and FtsZ.

In terms of biological role, cell division inhibitor that blocks the formation of polar Z ring septums. Rapidly oscillates between the poles of the cell to destabilize FtsZ filaments that have formed before they mature into polar Z rings. Prevents FtsZ polymerization. This is Probable septum site-determining protein MinC from Rhodopseudomonas palustris (strain BisA53).